Consider the following 501-residue polypeptide: Aldehyde dehydrogenase 1A1 (501 aa).

The residue at position 2 (serine 2) is an N-acetylserine. Residues lysine 91 and lysine 128 each carry the N6-acetyllysine modification. NAD(+) contacts are provided by residues isoleucine 167–asparagine 170, lysine 193–glutamate 196, glycine 226–proline 227, and glycine 246–serine 247. Lysine 252 is modified (N6-acetyllysine). Glutamate 269 (proton acceptor) is an active-site residue. NAD(+) is bound at residue glutamate 269–glycine 271. Cysteine 303 functions as the Nucleophile in the catalytic mechanism. A mediates interaction with PRMT3 region spans residues leucine 336–serine 501. Phosphothreonine is present on threonine 337. Glutamate 349 to lysine 353 lines the NAD(+) pocket. An N6-acetyllysine mark is found at lysine 353 and lysine 367. An NAD(+)-binding site is contributed by glutamate 400–phenylalanine 402. Lysine 410 is modified (N6-acetyllysine). The residue at position 413 (serine 413) is a Phosphoserine. Residues lysine 419 and lysine 495 each carry the N6-acetyllysine modification.

The protein belongs to the aldehyde dehydrogenase family. As to quaternary structure, homotetramer. Interacts with PRMT3; the interaction is direct, inhibits ALDH1A1 aldehyde dehydrogenase activity and is independent of the methyltransferase activity of PRMT3. In terms of processing, the N-terminus is blocked most probably by acetylation.

It is found in the cytoplasm. It localises to the cytosol. The protein localises to the cell projection. The protein resides in the axon. It carries out the reaction an aldehyde + NAD(+) + H2O = a carboxylate + NADH + 2 H(+). It catalyses the reaction all-trans-retinal + NAD(+) + H2O = all-trans-retinoate + NADH + 2 H(+). The enzyme catalyses 9-cis-retinal + NAD(+) + H2O = 9-cis-retinoate + NADH + 2 H(+). The catalysed reaction is 11-cis-retinal + NAD(+) + H2O = 11-cis-retinoate + NADH + 2 H(+). It carries out the reaction 13-cis-retinal + NAD(+) + H2O = 13-cis-retinoate + NADH + 2 H(+). It catalyses the reaction 3-deoxyglucosone + NAD(+) + H2O = 2-dehydro-3-deoxy-D-gluconate + NADH + 2 H(+). The enzyme catalyses (E)-4-hydroxynon-2-enal + NAD(+) + H2O = (E)-4-hydroxynon-2-enoate + NADH + 2 H(+). The catalysed reaction is malonaldehyde + NAD(+) + H2O = 3-oxopropanoate + NADH + 2 H(+). It carries out the reaction hexanal + NAD(+) + H2O = hexanoate + NADH + 2 H(+). It catalyses the reaction propanal + NAD(+) + H2O = propanoate + NADH + 2 H(+). The enzyme catalyses acetaldehyde + NAD(+) + H2O = acetate + NADH + 2 H(+). The catalysed reaction is benzaldehyde + NAD(+) + H2O = benzoate + NADH + 2 H(+). It carries out the reaction 4-aminobutanal + NAD(+) + H2O = 4-aminobutanoate + NADH + 2 H(+). Its pathway is cofactor metabolism; retinol metabolism. Its activity is regulated as follows. Inhibited by duocarmycin analogs. Cytosolic dehydrogenase that catalyzes the irreversible oxidation of a wide range of aldehydes to their corresponding carboxylic acid. Functions downstream of retinol dehydrogenases and catalyzes the oxidation of retinaldehyde into retinoic acid, the second step in the oxidation of retinol/vitamin A into retinoic acid. This pathway is crucial to control the levels of retinol and retinoic acid, two important molecules which excess can be teratogenic and cytotoxic. Also oxidizes aldehydes resulting from lipid peroxidation like (E)-4-hydroxynon-2-enal/HNE, malonaldehyde and hexanal that form protein adducts and are highly cytotoxic. By participating for instance to the clearance of (E)-4-hydroxynon-2-enal/HNE in the lens epithelium prevents the formation of HNE-protein adducts and lens opacification. Also functions downstream of fructosamine-3-kinase in the fructosamine degradation pathway by catalyzing the oxidation of 3-deoxyglucosone, the carbohydrate product of fructosamine 3-phosphate decomposition, which is itself a potent glycating agent that may react with lysine and arginine side-chains of proteins. Also has an aminobutyraldehyde dehydrogenase activity and is probably part of an alternative pathway for the biosynthesis of GABA/4-aminobutanoate in midbrain, thereby playing a role in GABAergic synaptic transmission. The polypeptide is Aldehyde dehydrogenase 1A1 (Ovis aries (Sheep)).